We begin with the raw amino-acid sequence, 596 residues long: Alpha-1,3-galactosidase A (596 aa).

A signal peptide spans 1 to 21 (MQNPVASLLFILAMLTGPCPA). The tract at residues 23–57 (DYPERTERTQSAGNHVWHIDPDKGNDGNPGTAPST) is disordered. PbH1 repeat units lie at residues 351–373 (RGKI…NVHG), 482–504 (RKPV…LVED), 515–537 (VRNM…QIVP), and 547–569 (HRNI…RIRH).

This sequence belongs to the glycosyl hydrolase 110 family. A subfamily.

The catalysed reaction is Hydrolysis of terminal, non-reducing branched (1-&gt;3)-alpha-D-galactosidic residues, producing free D-galactose.. The enzyme catalyses Hydrolysis of terminal, non-reducing alpha-D-galactose residues in alpha-D-galactosides, including galactose oligosaccharides, galactomannans and galactolipids.. Functionally, alpha-galactosidase that specifically removes branched alpha-1,3-linked galactose residues present in blood group B antigens. Has no activity toward linear alpha-1,3-linked galactose residues. This Akkermansia muciniphila (strain ATCC BAA-835 / DSM 22959 / JCM 33894 / BCRC 81048 / CCUG 64013 / CIP 107961 / Muc) protein is Alpha-1,3-galactosidase A (glaA).